Consider the following 237-residue polypeptide: Ribosomal RNA large subunit methyltransferase E (237 aa).

The S-adenosyl-L-methionine site is built by Gly80, Trp82, Asp108, Asp124, and Asp148. Lys188 (proton acceptor) is an active-site residue.

The protein belongs to the class I-like SAM-binding methyltransferase superfamily. RNA methyltransferase RlmE family.

The protein localises to the cytoplasm. The enzyme catalyses uridine(2552) in 23S rRNA + S-adenosyl-L-methionine = 2'-O-methyluridine(2552) in 23S rRNA + S-adenosyl-L-homocysteine + H(+). Specifically methylates the uridine in position 2552 of 23S rRNA at the 2'-O position of the ribose in the fully assembled 50S ribosomal subunit. The sequence is that of Ribosomal RNA large subunit methyltransferase E from Jannaschia sp. (strain CCS1).